The chain runs to 359 residues: MLGVIRNKTIRPSFSAFRFFSSAKQMTVRDALNSALDVEMSADSKVFLMGEEVGEYQGAYKVTKGLLEKYGPERVLDTPITEAGFTGIGVGAAYYGLKPVVEFMTFNFSMQAIDHIINSAAKSNYMSAGQISVPIVFRGLNGDAAGVGAQHSHCYASWYGSCPGLKVLVPHSAEDARGLLKAAIRDPDPVVFLENELLYGESFPVSAEVLDSSFWLPIGKAKIEREGKDVTITAFSKMVGFALKAAEILEKEGISAEVINLRSIRPLDRPTINASVRKTNRLVTVEEGFPQHGVGAEICTSVIEESFGYLDATVERIGGADVPMPYAGNLERLVVPHVEDIVRAAKRACHRSVPLAAAA.

The N-terminal 19 residues, 1–19 (MLGVIRNKTIRPSFSAFRF), are a transit peptide targeting the mitochondrion. A thiamine diphosphate-binding site is contributed by Glu-82. K(+) contacts are provided by Ile-135, Ala-183, Ile-184, and Asp-186.

In terms of assembly, tetramer of 2 alpha and 2 beta subunits. Thiamine diphosphate serves as cofactor.

The protein resides in the mitochondrion matrix. It catalyses the reaction N(6)-[(R)-lipoyl]-L-lysyl-[protein] + pyruvate + H(+) = N(6)-[(R)-S(8)-acetyldihydrolipoyl]-L-lysyl-[protein] + CO2. Functionally, the pyruvate dehydrogenase complex catalyzes the overall conversion of pyruvate to acetyl-CoA and CO(2). It contains multiple copies of three enzymatic components: pyruvate dehydrogenase (E1), dihydrolipoamide acetyltransferase (E2) and lipoamide dehydrogenase (E3). The protein is Pyruvate dehydrogenase E1 component subunit beta, mitochondrial of Pisum sativum (Garden pea).